The following is an 88-amino-acid chain: Small ribosomal subunit protein uS19 (88 aa).

Belongs to the universal ribosomal protein uS19 family.

Functionally, protein S19 forms a complex with S13 that binds strongly to the 16S ribosomal RNA. This Chlamydia pneumoniae (Chlamydophila pneumoniae) protein is Small ribosomal subunit protein uS19 (rpsS).